The following is a 159-amino-acid chain: Disulfide bond formation protein B (159 aa).

Over 1-8 (MQANSRAF) the chain is Cytoplasmic. A helical membrane pass occupies residues 9–25 (FLLIAVIAFGLVGYALY). The Periplasmic portion of the chain corresponds to 26–43 (LQHVEGLQPCPLCVLQRF). C35 and C38 are disulfide-bonded. The chain crosses the membrane as a helical span at residues 44–57 (AFVGIGVFSLLAAL). Over 58–63 (SSATRL) the chain is Cytoplasmic. A helical membrane pass occupies residues 64–81 (LWHGLGMLSGLGGIFVAG). Residues 82–136 (YHVSLLLNPKASCGIDPIENWVNALPTAKWLPQVFESDGLCTAPLPPVLGVSIPL) lie on the Periplasmic side of the membrane. C94 and C122 are oxidised to a cystine. A helical membrane pass occupies residues 137–155 (WSLIWMVILALTLVVAMIR). The Cytoplasmic segment spans residues 156 to 159 (RERR).

It belongs to the DsbB family.

It is found in the cell inner membrane. In terms of biological role, required for disulfide bond formation in some periplasmic proteins. Acts by oxidizing the DsbA protein. The polypeptide is Disulfide bond formation protein B (Ralstonia nicotianae (strain ATCC BAA-1114 / GMI1000) (Ralstonia solanacearum)).